The following is a 448-amino-acid chain: Omega-6 fatty acid desaturase, chloroplastic (448 aa).

A chloroplast-targeting transit peptide spans 1–69 (MASRIADSLF…VKRRIGCIKA (69 aa)). N-acetylvaline is present on Val-70. A run of 2 helical transmembrane segments spans residues 124-144 (LKAL…LFMI) and 149-169 (WYLL…FFVI). The short motif at 171 to 175 (HDCAH) is the Histidine box-1 element. The Histidine box-2 signature appears at 207–211 (HDRHH). Transmembrane regions (helical) follow at residues 282-302 (VFAF…ILGW) and 303-323 (VKFW…FTMV). Residues 367 to 371 (HIPHH) carry the Histidine box-3 motif.

Belongs to the fatty acid desaturase type 1 family.

The protein resides in the plastid. It localises to the chloroplast inner membrane. The enzyme catalyses a (9Z)-octadecenoyl-containing glycerolipid + 2 reduced [2Fe-2S]-[ferredoxin] + O2 + 2 H(+) = a (9Z,12Z)-octadecadienoyl-containing glycerolipid + 2 oxidized [2Fe-2S]-[ferredoxin] + 2 H2O. The protein operates within lipid metabolism; polyunsaturated fatty acid biosynthesis. Chloroplast omega-6 fatty acid desaturase introduces the second double bond in the biosynthesis of 16:3 and 18:3 fatty acids, important constituents of plant membranes. It is thought to use ferredoxin as an electron donor and to act on fatty acids esterified to galactolipids, sulfolipids and phosphatidylglycerol. This is Omega-6 fatty acid desaturase, chloroplastic from Arabidopsis thaliana (Mouse-ear cress).